The primary structure comprises 926 residues: MSFQNPSYINAKHRSFLQPKDTQDSQDLRNWVSHSSVDEETAYSSSTLSSSSSKSFPCYDEYDEIKSPDDQKVEYMKTLRTLEEDAFSYTDSVYDFEERSFDEHEPPIPPLHKTGVFSVPLQPTHTVNSNSDDGYENSSKNEYLDFNSEISASPVNEPMTHSQSYTSIDRLNSSSSHYSKDVPLLCGSLTIDCPTPIDLRGMLGPFMQKNPDEASFLRYSAITCQPEDMNNNGLQLRTWSTGRDIQIAVCLTLSDEDLASFAISLSSIMNNLKHLCSRSKSRVWGNESWEKVLVCVVIDGRNTVHQNVLDLLASIGVYQPHIAKGRVNGKRTLSHMYEFTSTINVDEKLNLTTATGDGNVPMQMLLCVKDRRLGTYNSHRWFLNGIASLARPKVCLFVRNGARLGPTSIYHAWKAFDVDSTIGGMCGKTSIDTGKFGFRLLNPFIASQHFDQMIHNNLRLPYDSCMGYISNALNAIYGFRYVALQDSYPNPGPLADYFEQDQYEIPRRGILQSNAFLAQEQLLFWKVITRKDAKWHLQYVPEACATIEAPNSMAGILESKKSEINSSFSLAVYVIVDFFSLWTTRHKFFRFLLLTVQSLVFAIEKLVNFFSMANFFLAFYFVCNATSYSSLNPYGNWARPLFLVFEYILICLIFSQFMLAMGNRPRSCRVLLFISTALFSIIMIYFVFCVFYISLIPLHNSDNSEIVLGNNYFTTLIFSSLLILACYAFVSLICMDPFFIFTCIVQYILLMPTRIYTEQIYALCHLDDASISKDDNQQEFNFDTGITHCSMNDEGYTTISIPKANVLNSVYNSSLKNFSSSNDTSVYHDVQDHCYRKPQSYEDHYQDIRTRYVLVWAVSNLILAIVLIQVFDGMRFINNGYMKYIFWSIVAFTAWKTMGAVTFIATKIISRIANCVKSKLYIFNDP.

A disordered region spans residues 1 to 56 (MSFQNPSYINAKHRSFLQPKDTQDSQDLRNWVSHSSVDEETAYSSSTLSSSSSKSF). Over residues 44 to 55 (SSSTLSSSSSKS) the composition is skewed to low complexity. 7 helical membrane-spanning segments follow: residues 564–584 (INSS…LWTT), 599–619 (LVFA…FLAF), 641–661 (LFLV…MLAM), 671–691 (LLFI…FCVF), 721–741 (LLIL…FFIF), 853–873 (VLVW…VFDG), and 885–905 (IFWS…TFIA).

It belongs to the chitin synthase family.

Its subcellular location is the membrane. Functionally, plays a role in septum formation. Has no chitin synthase activity. This Schizosaccharomyces pombe (strain 972 / ATCC 24843) (Fission yeast) protein is Chitin synthase-like protein 2 (chs2).